The sequence spans 654 residues: Fatty acid photodecarboxylase, chloroplastic (654 aa).

A chloroplast-targeting transit peptide spans 1-62 (MASITSRASA…RRGGALSARA (62 aa)). Residues 93–94 (TA), glutamate 114, leucine 162, serine 166, 170–173 (NATL), and valine 298 each bind FAD. Hexadecanoate is bound by residues cysteine 432, arginine 451, tyrosine 466, and glutamine 486. Residue glycine 622 participates in FAD binding.

It belongs to the GMC oxidoreductase family. FAD serves as cofactor.

It is found in the plastid. It localises to the chloroplast. The catalysed reaction is a long-chain fatty acid + hnu + H(+) = a long-chain alkane + CO2. It catalyses the reaction hnu + hexadecanoate + H(+) = pentadecane + CO2. It carries out the reaction hnu + octadecanoate + H(+) = heptadecane + CO2. The enzyme catalyses heptadecanoate + hnu + H(+) = hexadecane + CO2. The catalysed reaction is hnu + tetradecanoate + H(+) = tridecane + CO2. It catalyses the reaction octanoate + hnu + H(+) = heptane + CO2. With respect to regulation, activated by blue light and repressed by red light. Functionally, catalyzes the decarboxylation of free fatty acids to n-alkanes or n-alkenes in response to blue light. Substrate preference is toward fatty acids with C16 or C17 chains. Converts n-octanoic acid (C8 chain) more efficiently than palmitate (n-hexadecanoic acid, C16 chain) into n-heptane (C7 chain) and n-pentadecane (C15 chain), respectively, partly due to an autocatalytic effect of its n-heptane product. Saturated fatty acids are converted to alkanes, not alkenes. The decarboxylation is initiated through electron abstraction from the fatty acid by the photo-excited FAD. The chain is Fatty acid photodecarboxylase, chloroplastic from Chlorella variabilis (Green alga).